Consider the following 311-residue polypeptide: Mycothiol acetyltransferase (311 aa).

Glu-35 contacts 1D-myo-inositol 2-(L-cysteinylamino)-2-deoxy-alpha-D-glucopyranoside. 79–81 (LVV) lines the acetyl-CoA pocket. The 157-residue stretch at 155-311 (VRTYVGTVDD…TAYALARIDD (157 aa)) folds into the N-acetyltransferase domain. 3 residues coordinate 1D-myo-inositol 2-(L-cysteinylamino)-2-deoxy-alpha-D-glucopyranoside: Glu-180, Lys-225, and Glu-235. Acetyl-CoA contacts are provided by residues 239 to 241 (LGV) and 246 to 252 (QGRGLGQ). Tyr-278 provides a ligand contact to 1D-myo-inositol 2-(L-cysteinylamino)-2-deoxy-alpha-D-glucopyranoside. Residue 283 to 288 (NVAAAR) participates in acetyl-CoA binding.

The protein belongs to the acetyltransferase family. MshD subfamily. Monomer.

It catalyses the reaction 1D-myo-inositol 2-(L-cysteinylamino)-2-deoxy-alpha-D-glucopyranoside + acetyl-CoA = mycothiol + CoA + H(+). Catalyzes the transfer of acetyl from acetyl-CoA to desacetylmycothiol (Cys-GlcN-Ins) to form mycothiol. The chain is Mycothiol acetyltransferase from Mycobacterium leprae (strain Br4923).